Here is a 116-residue protein sequence, read N- to C-terminus: C-C motif chemokine 6 (116 aa).

The signal sequence occupies residues 1 to 21; that stretch reads MRNSKTAISFFILVAVLGSQA. Intrachain disulfides connect Cys50/Cys73, Cys51/Cys89, and Cys60/Cys100.

This sequence belongs to the intercrine beta (chemokine CC) family. Post-translationally, the N-terminal is proteolytically cleaved by proteases associated with inflammatory responses. The processed forms CL6(22-95) and CCL6(23-95) show increase in CCR1-mediated signaling and chemotaxis assays in vitro. Expressed in myelopoietic bone marrow cultures stimulated by GM-CSF.

Its subcellular location is the secreted. Functionally, chemotactic factor that attracts mostly macrophage, but it can also attract B cells, CD4(+) lymphocytes and eosinophils. This Mus musculus (Mouse) protein is C-C motif chemokine 6 (Ccl6).